We begin with the raw amino-acid sequence, 386 residues long: Probable family 17 glucosidase SCW4 (386 aa).

A signal peptide spans 1–19; it reads MRLSNLIASASLLSAATLA. The propeptide occupies 20–30; it reads APANHEHKDKR. Residues 88–127 are disordered; sequence ENNSQVSAAASPASSSAATSTQSSSSSQASSSSSSGEDVS. An N-linked (GlcNAc...) asparagine glycan is attached at asparagine 89. The active-site Nucleophile is glutamate 323.

This sequence belongs to the glycosyl hydrolase 17 family. In terms of processing, N-glycosylated.

It localises to the secreted. The protein resides in the cell wall. Glucanases possibly play a role in cell expansion during growth, in cell-cell fusion during mating, and in spore release during sporulation. This Saccharomyces cerevisiae (strain ATCC 204508 / S288c) (Baker's yeast) protein is Probable family 17 glucosidase SCW4 (SCW4).